The chain runs to 707 residues: G protein-coupled receptor kinase 2 (707 aa).

The tract at residues 1–190 is N-terminal; that stretch reads MADLEAVLAD…ELNMQLTMND (190 aa). The 122-residue stretch at 54 to 175 folds into the RGS domain; it reads KFDKIFNQKL…LESDKFTRFC (122 aa). A Protein kinase domain is found at 191 to 455; that stretch reads FSVHRIIGRG…PTEVKEHPFF (265 aa). Residues 197–205 and Lys220 each bind ATP; that span reads IGRGGFGEV. Asp318 (proton acceptor) is an active-site residue. The region spanning 456–523 is the AGC-kinase C-terminal domain; sequence KDVDWQTVYL…VISERWQNEI (68 aa). Residues 558–658 form the PH domain; the sequence is DVIVHGYIKK…WHTSLRTAHK (101 aa).

It belongs to the protein kinase superfamily. AGC Ser/Thr protein kinase family. GPRK subfamily. In terms of assembly, interacts with amx-2; the interaction promotes phosphorylation of amx-2. Expressed in many neurons in the adult including the ASH neurons and other sensory neurons, many interneurons, and motor neurons of the ventral nerve cord. Expressed broadly in head neurons and is detected in several head acetylcholine neurons including the AVA, AVB, AVD and AVE premotor interneurons, the SMD and RMD head motor neurons, and the AIN, AIY, SIA, SIB and SAA interneurons. Expressed in HSN motor neurons and VC4/VC5 motor neurons. Also expressed in vulval muscle cells. Expressed in premotor and RIS interneurons. Expressed in ciliated neurons such as AWA, AWB, AWC, ASH and ADF olfactory and nociceptive neurons, and in chemosensory ASH neurons. Expressed in RMG neurons and AVK interneurons.

The enzyme catalyses [G-protein-coupled receptor] + ATP = [G-protein-coupled receptor]-phosphate + ADP + H(+). Its function is as follows. Specifically phosphorylates the activated forms of G protein-coupled receptors. Required in adult sensory neurons for chemotaxis. Plays a role in the ASH sensory neurons in the chemotaxis response to NaCl where it is likely to modulate the strength of the NaCl avoidance response which occurs at high NaCl concentrations. Required in the HSN motor neurons for normal egg laying by promoting phosphorylation of amine oxidase amx-2 which inhibits amx-2 activity, preventing metabolism of serotonin. Acts in head acetylcholine neurons to positively regulate locomotion. Inactivates dopamine receptor dop-3 which leads to inactivation of guanine nucleotide-binding protein G(o) subunit goa-1 and activation of the unc-77/nca-1 and nca-2 ion channel proteins. Acts as a positive regulator of swimming by inactivating two dopamine receptors, dop-3 in the premotor interneurons that negatively controls early swimming through the nca ion channel, and dop-1 in the RIS neuron that inhibits late-stage swimming via the signaling of FMRFamide-like neuropeptide flp-11. Controls movement quiescence by negatively regulating multiple targets including egl-4 in ciliated neurons, the level of ligands of the neuropeptide receptor npr-1 in RMG neurons, and the secretion of flp-1 from AVK interneurons. The polypeptide is G protein-coupled receptor kinase 2 (grk-2) (Caenorhabditis elegans).